Reading from the N-terminus, the 106-residue chain is uncharacterized protein (106 aa).

Helical transmembrane passes span 53–70 and 74–93; these read LLLL…LDII and ILGL…WTLI.

It localises to the cell membrane. This is an uncharacterized protein from Bacillus subtilis (strain 168).